A 228-amino-acid polypeptide reads, in one-letter code: Prolactin-2A1 (228 aa).

A signal peptide spans 1-28; sequence MQLSVTHPCCRTLILLLVSNLLLWESEA. Intrachain disulfides connect Cys87/Cys203 and Cys220/Cys228.

This sequence belongs to the somatotropin/prolactin family. As to expression, expressed specifically in the placenta. Expression restricted to the junctional zone of the chorioallantoic placenta.

The protein localises to the secreted. The protein is Prolactin-2A1 (Prl2a1) of Mus musculus (Mouse).